A 152-amino-acid polypeptide reads, in one-letter code: Large ribosomal subunit protein eL29 (152 aa).

A compositionally biased stretch (basic residues) spans 1-26 (MAKSKNHTTHNQSRKWHRNGIKKPRS). Positions 1-32 (MAKSKNHTTHNQSRKWHRNGIKKPRSQRYESL) are disordered. Lys5 bears the N6-methyllysine mark. Phosphoserine is present on Ser31. Position 33 is an N6-acetyllysine (Lys33). Residues 119 to 152 (CRPKSQAKASTKAKPPAAAAPAAKGAQAPTKAPE) form a disordered region. The span at 121–152 (PKSQAKASTKAKPPAAAAPAAKGAQAPTKAPE) shows a compositional bias: low complexity.

This sequence belongs to the eukaryotic ribosomal protein eL29 family. As to quaternary structure, component of the large ribosomal subunit.

It is found in the cytoplasm. Component of the large ribosomal subunit. The ribosome is a large ribonucleoprotein complex responsible for the synthesis of proteins in the cell. This is Large ribosomal subunit protein eL29 (RPL29) from Bos taurus (Bovine).